The following is a 1295-amino-acid chain: Phosphoribosylformylglycinamidine synthase (1295 aa).

The interval 302-327 (SPWPGASTGSGGEIRDEGATGRGAKP) is disordered. Residues 306–317 (GASTGSGGEIRD) and A677 contribute to the ATP site. Mg(2+) is bound by residues D678, E717, N721, and D884. An ATP-binding site is contributed by S886. The 254-residue stretch at 1042-1295 (VAVLREQGVN…IFRNARKQLG (254 aa)) folds into the Glutamine amidotransferase type-1 domain. The active-site Nucleophile is C1135. Active-site residues include H1260 and E1262.

This sequence in the N-terminal section; belongs to the FGAMS family. In terms of assembly, monomer.

The protein resides in the cytoplasm. It catalyses the reaction N(2)-formyl-N(1)-(5-phospho-beta-D-ribosyl)glycinamide + L-glutamine + ATP + H2O = 2-formamido-N(1)-(5-O-phospho-beta-D-ribosyl)acetamidine + L-glutamate + ADP + phosphate + H(+). Its pathway is purine metabolism; IMP biosynthesis via de novo pathway; 5-amino-1-(5-phospho-D-ribosyl)imidazole from N(2)-formyl-N(1)-(5-phospho-D-ribosyl)glycinamide: step 1/2. Functionally, phosphoribosylformylglycinamidine synthase involved in the purines biosynthetic pathway. Catalyzes the ATP-dependent conversion of formylglycinamide ribonucleotide (FGAR) and glutamine to yield formylglycinamidine ribonucleotide (FGAM) and glutamate. The sequence is that of Phosphoribosylformylglycinamidine synthase from Photorhabdus laumondii subsp. laumondii (strain DSM 15139 / CIP 105565 / TT01) (Photorhabdus luminescens subsp. laumondii).